Reading from the N-terminus, the 477-residue chain is Probable glycine dehydrogenase (decarboxylating) subunit 2 (477 aa).

Lys-264 carries the N6-(pyridoxal phosphate)lysine modification.

It belongs to the GcvP family. C-terminal subunit subfamily. As to quaternary structure, the glycine cleavage system is composed of four proteins: P, T, L and H. In this organism, the P 'protein' is a heterodimer of two subunits. Requires pyridoxal 5'-phosphate as cofactor.

The catalysed reaction is N(6)-[(R)-lipoyl]-L-lysyl-[glycine-cleavage complex H protein] + glycine + H(+) = N(6)-[(R)-S(8)-aminomethyldihydrolipoyl]-L-lysyl-[glycine-cleavage complex H protein] + CO2. The glycine cleavage system catalyzes the degradation of glycine. The P protein binds the alpha-amino group of glycine through its pyridoxal phosphate cofactor; CO(2) is released and the remaining methylamine moiety is then transferred to the lipoamide cofactor of the H protein. The chain is Probable glycine dehydrogenase (decarboxylating) subunit 2 from Fervidobacterium nodosum (strain ATCC 35602 / DSM 5306 / Rt17-B1).